The following is a 47-amino-acid chain: Putative glycosylation-dependent cell adhesion molecule 1 (47 aa).

The signal sequence occupies residues 1–18 (MKFFMVLLPASLASTSLA).

Belongs to the PP3/GlyCAM-1 family. As to expression, expressed in cells harvested from milk of lactating women. Not found in other tissues.

The chain is Putative glycosylation-dependent cell adhesion molecule 1 (GLYCAM1) from Homo sapiens (Human).